A 64-amino-acid polypeptide reads, in one-letter code: Large ribosomal subunit protein bL35 (64 aa).

This sequence belongs to the bacterial ribosomal protein bL35 family.

The polypeptide is Large ribosomal subunit protein bL35 (Shewanella oneidensis (strain ATCC 700550 / JCM 31522 / CIP 106686 / LMG 19005 / NCIMB 14063 / MR-1)).